The following is a 369-amino-acid chain: Anhydro-N-acetylmuramic acid kinase (369 aa).

ATP is bound at residue 12–19 (GTSLDGVD).

This sequence belongs to the anhydro-N-acetylmuramic acid kinase family.

The enzyme catalyses 1,6-anhydro-N-acetyl-beta-muramate + ATP + H2O = N-acetyl-D-muramate 6-phosphate + ADP + H(+). It participates in amino-sugar metabolism; 1,6-anhydro-N-acetylmuramate degradation. The protein operates within cell wall biogenesis; peptidoglycan recycling. In terms of biological role, catalyzes the specific phosphorylation of 1,6-anhydro-N-acetylmuramic acid (anhMurNAc) with the simultaneous cleavage of the 1,6-anhydro ring, generating MurNAc-6-P. Is required for the utilization of anhMurNAc either imported from the medium or derived from its own cell wall murein, and thus plays a role in cell wall recycling. This chain is Anhydro-N-acetylmuramic acid kinase, found in Shigella boydii serotype 4 (strain Sb227).